A 165-amino-acid polypeptide reads, in one-letter code: Chorismate pyruvate-lyase (165 aa).

4 residues coordinate substrate: Met35, Arg77, Leu115, and Glu156.

The protein belongs to the UbiC family. As to quaternary structure, monomer.

The protein localises to the cytoplasm. The catalysed reaction is chorismate = 4-hydroxybenzoate + pyruvate. The protein operates within cofactor biosynthesis; ubiquinone biosynthesis. Removes the pyruvyl group from chorismate, with concomitant aromatization of the ring, to provide 4-hydroxybenzoate (4HB) for the ubiquinone pathway. The sequence is that of Chorismate pyruvate-lyase from Salmonella enteritidis PT4 (strain P125109).